A 266-amino-acid polypeptide reads, in one-letter code: UPF0294 protein YafD (266 aa).

It belongs to the UPF0294 family.

The protein resides in the cytoplasm. The sequence is that of UPF0294 protein YafD from Salmonella paratyphi C (strain RKS4594).